The sequence spans 328 residues: Probable voltage-gated potassium channel subunit beta (328 aa).

Positions 21, 27, and 49 each coordinate NADP(+). The Proton donor/acceptor role is filled by tyrosine 54. Positions 152, 178, 207, 208, 209, 210, 211, 218, 229, 285, 287, 291, 294, and 295 each coordinate NADP(+).

This sequence belongs to the shaker potassium channel beta subunit family. In terms of assembly, forms heteromultimeric complexes with potassium channel alpha subunits. Expressed in late-developed leaves with the highest expression in the flag leaf (at protein level).

Its function is as follows. Probable accessory potassium channel protein which modulates the activity of the pore-forming alpha subunit. This chain is Probable voltage-gated potassium channel subunit beta (KOB1), found in Oryza sativa subsp. japonica (Rice).